The following is a 238-amino-acid chain: Neuromodulin (238 aa).

The disordered stretch occupies residues 1–238; the sequence is MLCCMRRTKQ…EEPEADQEHA (238 aa). 2 S-palmitoyl cysteine lipidation sites follow: cysteine 3 and cysteine 4. Basic and acidic residues predominate over residues 9 to 32; the sequence is KQVEKNDDDQKIEQDGIKPEDKAH. In terms of domain architecture, IQ spans 31–60; the sequence is AHKAATKIQASFRGHITRKKLKGEKKDDVQ. Serine 41 bears the Phosphoserine; by PHK and PKC mark. Residues 54-83 are compositionally biased toward basic and acidic residues; that stretch reads EKKDDVQAAEAEANKKDEAPVADGVEKKGE. A compositionally biased stretch (low complexity) spans 84 to 95; it reads GTTTAEAAPATG. A compositionally biased stretch (basic and acidic residues) spans 97–116; that stretch reads KPDEPGKAGETPSEEKKGEG. A compositionally biased stretch (low complexity) spans 119–130; sequence ATEQAAPQAPAS. Residues 139–154 show a composition bias toward polar residues; the sequence is ETESATKASTDNSPSS. Phosphoserine is present on residues serine 151, serine 153, and serine 154. Basic and acidic residues predominate over residues 155-167; sequence KAEDAPAKEEPKQ. Residues 168-199 show a composition bias toward low complexity; it reads ADVPAAVTAAAATTPAAEDAAAKATAQPPTET. At threonine 181 the chain carries Phosphothreonine. A phosphoserine; by CK2 mark is found at serine 202 and serine 203. Over residues 213–225 the composition is skewed to basic and acidic residues; that stretch reads DETKPKESARQDE. A compositionally biased stretch (acidic residues) spans 226-238; that stretch reads GKEEEPEADQEHA.

This sequence belongs to the neuromodulin family. Identified in a complex containing FGFR4, NCAM1, CDH2, PLCG1, FRS2, SRC, SHC1, GAP43 and CTTN. Interacts (via IQ domain) with calmodulin. Binds calmodulin with a greater affinity in the absence of Ca(2+) than in its presence. Post-translationally, phosphorylated. Phosphorylation of this protein by a protein kinase C is specifically correlated with certain forms of synaptic plasticity. Palmitoylated by ZDHHC3. Palmitoylation is regulated by ARF6 and is essential for plasma membrane association and axonal and dendritic filopodia induction. Deacylated by LYPLA2.

The protein localises to the cell membrane. Its subcellular location is the cell projection. It is found in the growth cone membrane. The protein resides in the synapse. It localises to the filopodium membrane. The protein localises to the perikaryon. Its subcellular location is the dendrite. It is found in the axon. The protein resides in the cytoplasm. This protein is associated with nerve growth. It is a major component of the motile 'growth cones' that form the tips of elongating axons. Plays a role in axonal and dendritic filopodia induction. This is Neuromodulin (GAP43) from Homo sapiens (Human).